The sequence spans 394 residues: Elongation factor Tu 1 (394 aa).

In terms of domain architecture, tr-type G spans 10–204; that stretch reads KPHVNVGTIG…ALDSYIPEPE (195 aa). Residues 19-26 are G1; it reads GHVDHGKT. 19–26 serves as a coordination point for GTP; it reads GHVDHGKT. Thr26 lines the Mg(2+) pocket. Residues 60 to 64 are G2; the sequence is GITIN. Residues 81–84 are G3; sequence DCPG. GTP-binding positions include 81–85 and 136–139; these read DCPGH and NKCD. A G4 region spans residues 136–139; sequence NKCD. Positions 174–176 are G5; sequence SAL.

Belongs to the TRAFAC class translation factor GTPase superfamily. Classic translation factor GTPase family. EF-Tu/EF-1A subfamily. As to quaternary structure, monomer.

The protein resides in the cytoplasm. It catalyses the reaction GTP + H2O = GDP + phosphate + H(+). Its function is as follows. GTP hydrolase that promotes the GTP-dependent binding of aminoacyl-tRNA to the A-site of ribosomes during protein biosynthesis. This chain is Elongation factor Tu 1, found in Shewanella sp. (strain MR-4).